Here is a 137-residue protein sequence, read N- to C-terminus: Mobilization protein B (137 aa).

As to quaternary structure, interacts with MobA and MobC to form the relaxosome.

Functionally, this protein is essential to promote the specific transfer of the plasmid in the presence of conjugative plasmids. The sequence is that of Mobilization protein B (mobB) from Escherichia coli.